A 704-amino-acid chain; its full sequence is Methionine--tRNA ligase (704 aa).

The 'HIGH' region motif lies at 17 to 27 (PYANGPIHLGH). Residues cysteine 148, cysteine 151, cysteine 161, and cysteine 164 each coordinate Zn(2+). Residues 348 to 352 (KMSKS) carry the 'KMSKS' region motif. An ATP-binding site is contributed by lysine 351. One can recognise a tRNA-binding domain in the interval 603–704 (ELSKVELRVG…KDAKPGDRLK (102 aa)).

Belongs to the class-I aminoacyl-tRNA synthetase family. MetG type 1 subfamily. In terms of assembly, homodimer. Zn(2+) is required as a cofactor.

It localises to the cytoplasm. It catalyses the reaction tRNA(Met) + L-methionine + ATP = L-methionyl-tRNA(Met) + AMP + diphosphate. Functionally, is required not only for elongation of protein synthesis but also for the initiation of all mRNA translation through initiator tRNA(fMet) aminoacylation. The sequence is that of Methionine--tRNA ligase from Leptospira borgpetersenii serovar Hardjo-bovis (strain L550).